We begin with the raw amino-acid sequence, 401 residues long: Phosphoglycerate kinase 3, cytosolic (401 aa).

(2R)-3-phosphoglycerate is bound by residues V24, D25, N27, R41, S63, H64, G66, R67, R122, H154, and R155. G200 lines the ADP pocket. G200 contacts CDP. The AMP site is built by K202 and K206. Residue K206 participates in ATP binding. G224 is a binding site for ADP. Residue G224 participates in CDP binding. AMP contacts are provided by G225 and G297. Residues G225, G297, and N321 each coordinate ATP. The CDP site is built by G322 and F327. F327 is a binding site for ADP. E328 contacts AMP. Positions 328, 359, and 360 each coordinate ATP. A Mg(2+)-binding site is contributed by D359.

It belongs to the phosphoglycerate kinase family. Monomer. It depends on Mg(2+) as a cofactor. As to expression, expressed in roots, leaves and inflorescence.

The protein localises to the cytoplasm. It carries out the reaction (2R)-3-phosphoglycerate + ATP = (2R)-3-phospho-glyceroyl phosphate + ADP. It participates in carbohydrate degradation; glycolysis; pyruvate from D-glyceraldehyde 3-phosphate: step 2/5. The sequence is that of Phosphoglycerate kinase 3, cytosolic from Arabidopsis thaliana (Mouse-ear cress).